The primary structure comprises 380 residues: GDSL esterase/lipase At3g26430 (380 aa).

The signal sequence occupies residues 1-25; it reads METNLLLVKCVLLASCLIHPRACSP. Residue serine 38 is the Nucleophile of the active site. Residues asparagine 97, asparagine 115, and asparagine 183 are each glycosylated (N-linked (GlcNAc...) asparagine). Catalysis depends on residues aspartate 346 and histidine 349.

Belongs to the 'GDSL' lipolytic enzyme family.

Its subcellular location is the secreted. The catalysed reaction is hexadecanoate ester + H2O = an aliphatic alcohol + hexadecanoate + H(+). It carries out the reaction a butanoate ester + H2O = an aliphatic alcohol + butanoate + H(+). Lipase activity is inhibited by phenylmethylsulfonyl fluoride (PMSF), but not neostigmine bromide (NB). Its function is as follows. Lipase that can hydrolyze p-nitrophenyl butyrate and p-nitrophenyl palmitate in vitro. Possesses low activity against p-nitrophenyl acetate. Substrate preference is p-nitrophenyl palmitate &gt; p-nitrophenyl butyrate &gt;&gt; p-nitrophenyl acetate. Lacks cholinesterase activity. The sequence is that of GDSL esterase/lipase At3g26430 from Arabidopsis thaliana (Mouse-ear cress).